Here is a 1120-residue protein sequence, read N- to C-terminus: Elongation factor-like GTPase 1 (1120 aa).

Residues 17–272 (ANIRNICVLA…LMKTLWGDYY (256 aa)) enclose the tr-type G domain. GTP-binding positions include 26–33 (AHVDHGKT), 92–96 (DSPGH), and 146–149 (NKID). The interval 430-496 (PRPLTQEEIA…VESMTPKPVL (67 aa)) is disordered. Composition is skewed to basic and acidic residues over residues 438–452 (IAQR…HAEK) and 475–484 (PKGEEPRGDE). Lys528 is subject to N6-acetyllysine. Residues 907–930 (ASDLAKEGQEENETCSGGNENQEL) form a disordered region. Positions 920–930 (TCSGGNENQEL) are enriched in polar residues.

This sequence belongs to the TRAFAC class translation factor GTPase superfamily. Classic translation factor GTPase family. As to quaternary structure, associates with the 60S ribosomal subunit. Found in a complex consisting of the 60S ribosomal subunit, SBDS and EFL1. Interacts with SBDS and binds to GTP and GDP; the interaction with SBDS decreases EFL1 affinity for GDP and facilitates GDP release. As to expression, expressed at low levels in brain. Expression is highly increased in glioma tissues.

It catalyses the reaction GTP + H2O = GDP + phosphate + H(+). Its activity is regulated as follows. GTPase activity is stimulated in the presence of 60S ribosome subunits. Functionally, GTPase involved in the biogenesis of the 60S ribosomal subunit and translational activation of ribosomes. Together with SBDS, triggers the GTP-dependent release of EIF6 from 60S pre-ribosomes in the cytoplasm, thereby activating ribosomes for translation competence by allowing 80S ribosome assembly and facilitating EIF6 recycling to the nucleus, where it is required for 60S rRNA processing and nuclear export. The polypeptide is Elongation factor-like GTPase 1 (Homo sapiens (Human)).